The following is a 159-amino-acid chain: Ribosomal RNA large subunit methyltransferase H (159 aa).

S-adenosyl-L-methionine-binding positions include leucine 76, glycine 108, and 127–132 (FGKLTL).

The protein belongs to the RNA methyltransferase RlmH family. Homodimer.

Its subcellular location is the cytoplasm. It catalyses the reaction pseudouridine(1915) in 23S rRNA + S-adenosyl-L-methionine = N(3)-methylpseudouridine(1915) in 23S rRNA + S-adenosyl-L-homocysteine + H(+). Functionally, specifically methylates the pseudouridine at position 1915 (m3Psi1915) in 23S rRNA. The sequence is that of Ribosomal RNA large subunit methyltransferase H from Latilactobacillus sakei subsp. sakei (strain 23K) (Lactobacillus sakei subsp. sakei).